Consider the following 207-residue polypeptide: Ribonuclease HII (207 aa).

The RNase H type-2 domain occupies Asp-12–Gly-201. Positions 18, 19, and 110 each coordinate a divalent metal cation.

The protein belongs to the RNase HII family. Mn(2+) is required as a cofactor. It depends on Mg(2+) as a cofactor.

It is found in the cytoplasm. The catalysed reaction is Endonucleolytic cleavage to 5'-phosphomonoester.. In terms of biological role, endonuclease that specifically degrades the RNA of RNA-DNA hybrids. The sequence is that of Ribonuclease HII from Pseudomonas putida (strain ATCC 47054 / DSM 6125 / CFBP 8728 / NCIMB 11950 / KT2440).